The following is a 515-amino-acid chain: ATP synthase subunit alpha (515 aa).

Residue 171-178 coordinates ATP; it reads GDRQTGKT.

The protein belongs to the ATPase alpha/beta chains family. F-type ATPases have 2 components, CF(1) - the catalytic core - and CF(0) - the membrane proton channel. CF(1) has five subunits: alpha(3), beta(3), gamma(1), delta(1), epsilon(1). CF(0) has three main subunits: a(1), b(2) and c(9-12). The alpha and beta chains form an alternating ring which encloses part of the gamma chain. CF(1) is attached to CF(0) by a central stalk formed by the gamma and epsilon chains, while a peripheral stalk is formed by the delta and b chains.

It localises to the cell inner membrane. It carries out the reaction ATP + H2O + 4 H(+)(in) = ADP + phosphate + 5 H(+)(out). Produces ATP from ADP in the presence of a proton gradient across the membrane. The alpha chain is a regulatory subunit. This chain is ATP synthase subunit alpha, found in Xylella fastidiosa (strain 9a5c).